Here is a 555-residue protein sequence, read N- to C-terminus: Undecaprenyl phosphate-alpha-4-amino-4-deoxy-L-arabinose arabinosyl transferase (555 aa).

A run of 11 helical transmembrane segments spans residues 6 to 26 (GSWA…PLNG), 87 to 107 (FGSV…AMLM), 116 to 136 (LATL…YSVL), 178 to 198 (FMTK…PIVI), 206 to 226 (LLIY…PWAL), 257 to 277 (APFW…LALL), 293 to 313 (ELFF…IAKG), 315 to 335 (LPTY…AYAE), 351 to 371 (VLNG…GSGL), 384 to 404 (PKIV…VVSV), and 411 to 431 (WSWA…AIPQ).

Belongs to the glycosyltransferase 83 family.

The protein resides in the cell inner membrane. The enzyme catalyses 4-amino-4-deoxy-alpha-L-arabinopyranosyl di-trans,octa-cis-undecaprenyl phosphate + lipid IVA = lipid IIA + di-trans,octa-cis-undecaprenyl phosphate.. It functions in the pathway lipopolysaccharide metabolism; 4-amino-4-deoxy-beta-L-arabinose-lipid A biosynthesis. Catalyzes the transfer of the L-Ara4N moiety of the glycolipid undecaprenyl phosphate-alpha-L-Ara4N to lipid A. The modified arabinose is attached to lipid A and is required for resistance to polymyxin and cationic antimicrobial peptides. This chain is Undecaprenyl phosphate-alpha-4-amino-4-deoxy-L-arabinose arabinosyl transferase, found in Serratia proteamaculans (strain 568).